The following is a 262-amino-acid chain: Phosphatidylglycerol--prolipoprotein diacylglyceryl transferase (262 aa).

A run of 4 helical transmembrane segments spans residues 9 to 29 (LGPL…ILAV), 41 to 61 (IIPD…ILGA), 80 to 100 (IFAI…GALV), and 109 to 129 (LINT…AQSL). Arg131 lines the a 1,2-diacyl-sn-glycero-3-phospho-(1'-sn-glycerol) pocket. A run of 3 helical transmembrane segments spans residues 167–187 (QPTF…ILIF), 197–217 (GHIT…IEGM), and 226–246 (GLRV…MIVI).

This sequence belongs to the Lgt family.

It is found in the cell membrane. The catalysed reaction is L-cysteinyl-[prolipoprotein] + a 1,2-diacyl-sn-glycero-3-phospho-(1'-sn-glycerol) = an S-1,2-diacyl-sn-glyceryl-L-cysteinyl-[prolipoprotein] + sn-glycerol 1-phosphate + H(+). It participates in protein modification; lipoprotein biosynthesis (diacylglyceryl transfer). Its function is as follows. Catalyzes the transfer of the diacylglyceryl group from phosphatidylglycerol to the sulfhydryl group of the N-terminal cysteine of a prolipoprotein, the first step in the formation of mature lipoproteins. This is Phosphatidylglycerol--prolipoprotein diacylglyceryl transferase from Streptococcus pneumoniae (strain P1031).